Consider the following 639-residue polypeptide: Synaptotagmin-16 (639 aa).

Over residues 95-119 the composition is skewed to polar residues; that stretch reads NSDLQDSVQTASPTLGQQAEDSSSV. The disordered stretch occupies residues 95 to 191; that stretch reads NSDLQDSVQT…SSESDEDVTK (97 aa). Pro residues predominate over residues 121-134; that stretch reads PPWPSKIPGAPKPQ. Residues 142 to 151 are compositionally biased toward basic and acidic residues; it reads EEDHHSERQR. A compositionally biased stretch (acidic residues) spans 174–187; sequence GDDEEPSTSSESDE. The C2 1 domain maps to 344–463; sequence KCGDLDVIFE…HPEGEMKVTL (120 aa). Residues 470 to 496 form a disordered region; it reads NLSSGESPLSPSVVSHSDSASSTQSLS. Positions 476–496 are enriched in low complexity; the sequence is SPLSPSVVSHSDSASSTQSLS. Residues 499–634 form the C2 2 domain; it reads GVPELLVGLS…SKGQQTCRWH (136 aa).

It belongs to the synaptotagmin family. Homodimer. Can also form heterodimers. As to expression, highly expressed in heart and testis. Moderately expressed in kidney.

In terms of biological role, may be involved in the trafficking and exocytosis of secretory vesicles in non-neuronal tissues. Is Ca(2+)-independent. In Mus musculus (Mouse), this protein is Synaptotagmin-16 (Syt16).